The sequence spans 172 residues: Stellate protein CG33238 (172 aa).

The protein belongs to the casein kinase 2 subunit beta family. Interacts in vitro with the casein kinase 2 alpha subunit (CkII-alpha). The relevance of such interaction is however unclear in vivo. Probably not expressed in wild-type flies. In males lacking the Y chromosome, it is testis-specific and constitutes the main component of star-shaped crystals.

In terms of biological role, unknown. In males lacking the Y chromosome, its strong overexpression leads to the appearance of proteinaceous star-shaped crystals in the primary spermatocytes causing meiotic drive, possibly by interfering with normal casein kinase 2 activity. This chain is Stellate protein CG33238 (Ste:CG33238), found in Drosophila melanogaster (Fruit fly).